A 263-amino-acid chain; its full sequence is 2-keto-4-pentenoate hydratase 1 (263 aa).

This sequence belongs to the hydratase/decarboxylase family. MhpD subfamily. The cofactor is a divalent metal cation.

It carries out the reaction (S)-4-hydroxy-2-oxopentanoate = (2Z)-2-hydroxypenta-2,4-dienoate + H2O. The protein operates within aromatic compound metabolism; 3-phenylpropanoate degradation. In terms of biological role, catalyzes the conversion of 2-hydroxypentadienoic acid (enolic form of 2-oxopent-4-enoate) to 4-hydroxy-2-ketopentanoic acid. This Dechloromonas aromatica (strain RCB) protein is 2-keto-4-pentenoate hydratase 1.